The following is a 535-amino-acid chain: Light-independent protochlorophyllide reductase subunit B (535 aa).

Aspartate 36 lines the [4Fe-4S] cluster pocket. Aspartate 292 functions as the Proton donor in the catalytic mechanism. Residue 428–429 (GL) coordinates substrate. The tract at residues 447 to 483 (SDDAAKAEPDQPVSNAHGHTESKTVSQGEPIASDEGG) is disordered.

Belongs to the ChlB/BchB/BchZ family. Protochlorophyllide reductase is composed of three subunits; BchL, BchN and BchB. Forms a heterotetramer of two BchB and two BchN subunits. It depends on [4Fe-4S] cluster as a cofactor.

It catalyses the reaction chlorophyllide a + oxidized 2[4Fe-4S]-[ferredoxin] + 2 ADP + 2 phosphate = protochlorophyllide a + reduced 2[4Fe-4S]-[ferredoxin] + 2 ATP + 2 H2O. It functions in the pathway porphyrin-containing compound metabolism; bacteriochlorophyll biosynthesis (light-independent). Component of the dark-operative protochlorophyllide reductase (DPOR) that uses Mg-ATP and reduced ferredoxin to reduce ring D of protochlorophyllide (Pchlide) to form chlorophyllide a (Chlide). This reaction is light-independent. The NB-protein (BchN-BchB) is the catalytic component of the complex. This is Light-independent protochlorophyllide reductase subunit B from Chlorobium phaeobacteroides (strain DSM 266 / SMG 266 / 2430).